A 1098-amino-acid polypeptide reads, in one-letter code: Probable arabinosyltransferase B (1098 aa).

12 helical membrane passes run 28 to 50, 217 to 239, 271 to 293, 402 to 419, 434 to 456, 472 to 494, 541 to 558, 570 to 587, 597 to 619, 626 to 648, 663 to 685, and 698 to 720; these read WVAT…LPVV, LKLL…LWRL, ASWR…WHVI, LRPE…YVLI, AVVT…AALV, LVGT…TVVF, FGFL…FIML, PAWR…FLMF, GLFA…PSVL, MAFL…GWWY, IDGI…YAAW, and LIRA…VFVA.

This sequence belongs to the emb family.

The protein resides in the cell membrane. Arabinosyl transferase responsible for the polymerization of arabinose into the arabinan of arabinogalactan. The sequence is that of Probable arabinosyltransferase B (embB) from Mycobacterium bovis (strain ATCC BAA-935 / AF2122/97).